A 162-amino-acid chain; its full sequence is uncharacterized protein (162 aa).

Positions 6–78 (LDDLDRNILR…ALIVLEVGKP (73 aa)) constitute an HTH asnC-type domain. The H-T-H motif DNA-binding region spans 25 to 44 (ISELSEQLKKPESTIHFRIK).

This is an uncharacterized protein from Pyrococcus furiosus (strain ATCC 43587 / DSM 3638 / JCM 8422 / Vc1).